The chain runs to 679 residues: DNA ligase (679 aa).

Residues aspartate 43–aspartate 47, serine 92–methionine 93, and glutamate 124 each bind NAD(+). Lysine 126 (N6-AMP-lysine intermediate) is an active-site residue. NAD(+) contacts are provided by arginine 147, glutamate 181, lysine 297, and lysine 321. Zn(2+) contacts are provided by cysteine 415, cysteine 418, cysteine 433, and cysteine 438. Residues threonine 599–asparagine 679 form the BRCT domain.

Belongs to the NAD-dependent DNA ligase family. LigA subfamily. Requires Mg(2+) as cofactor. Mn(2+) is required as a cofactor.

It carries out the reaction NAD(+) + (deoxyribonucleotide)n-3'-hydroxyl + 5'-phospho-(deoxyribonucleotide)m = (deoxyribonucleotide)n+m + AMP + beta-nicotinamide D-nucleotide.. Functionally, DNA ligase that catalyzes the formation of phosphodiester linkages between 5'-phosphoryl and 3'-hydroxyl groups in double-stranded DNA using NAD as a coenzyme and as the energy source for the reaction. It is essential for DNA replication and repair of damaged DNA. The polypeptide is DNA ligase (Limosilactobacillus fermentum (strain NBRC 3956 / LMG 18251) (Lactobacillus fermentum)).